The chain runs to 355 residues: RNA 3'-terminal phosphate cyclase (355 aa).

ATP-binding positions include glutamine 100 and 300-304 (HLADQ). The active-site Tele-AMP-histidine intermediate is the histidine 325.

Belongs to the RNA 3'-terminal cyclase family. Type 1 subfamily.

The protein resides in the cytoplasm. The catalysed reaction is a 3'-end 3'-phospho-ribonucleotide-RNA + ATP = a 3'-end 2',3'-cyclophospho-ribonucleotide-RNA + AMP + diphosphate. In terms of biological role, catalyzes the conversion of 3'-phosphate to a 2',3'-cyclic phosphodiester at the end of RNA. The mechanism of action of the enzyme occurs in 3 steps: (A) adenylation of the enzyme by ATP; (B) transfer of adenylate to an RNA-N3'P to produce RNA-N3'PP5'A; (C) and attack of the adjacent 2'-hydroxyl on the 3'-phosphorus in the diester linkage to produce the cyclic end product. The biological role of this enzyme is unknown but it is likely to function in some aspects of cellular RNA processing. The chain is RNA 3'-terminal phosphate cyclase from Methanosarcina acetivorans (strain ATCC 35395 / DSM 2834 / JCM 12185 / C2A).